The primary structure comprises 493 residues: Glutamyl-tRNA(Gln) amidotransferase subunit A (493 aa).

Active-site charge relay system residues include lysine 79 and serine 159. Serine 183 functions as the Acyl-ester intermediate in the catalytic mechanism.

It belongs to the amidase family. GatA subfamily. As to quaternary structure, heterotrimer of A, B and C subunits.

The catalysed reaction is L-glutamyl-tRNA(Gln) + L-glutamine + ATP + H2O = L-glutaminyl-tRNA(Gln) + L-glutamate + ADP + phosphate + H(+). In terms of biological role, allows the formation of correctly charged Gln-tRNA(Gln) through the transamidation of misacylated Glu-tRNA(Gln) in organisms which lack glutaminyl-tRNA synthetase. The reaction takes place in the presence of glutamine and ATP through an activated gamma-phospho-Glu-tRNA(Gln). This is Glutamyl-tRNA(Gln) amidotransferase subunit A from Agrobacterium fabrum (strain C58 / ATCC 33970) (Agrobacterium tumefaciens (strain C58)).